Here is a 520-residue protein sequence, read N- to C-terminus: Sensory neuron membrane protein 2 (520 aa).

Residues 1 to 7 are Cytoplasmic-facing; the sequence is MLGKHSK. A helical transmembrane segment spans residues 8–28; it reads IFFGVSLIFLVIAIVLASWGF. Over 29 to 468 the chain is Extracellular; that stretch reads QKIVNKQIQK…DSHKLLGYVE (440 aa). Residues Asn44, Asn67, Asn104, Asn228, Asn271, Asn313, and Asn342 are each glycosylated (N-linked (GlcNAc...) asparagine). Disulfide bonds link Cys267–Cys337, Cys298–Cys361, and Cys339–Cys350. A helical transmembrane segment spans residues 469–489; it reads VAKWFLLTIAIISVIASAVAV. Residues 490 to 520 are Cytoplasmic-facing; the sequence is ARANALLSWPRNSNSVSFILGPSVTQVNKGN.

This sequence belongs to the CD36 family. Localizes to cells surrounding the sensory neurons in the antenna. Associate in a ratio of 2:1 with the neurons expressing the other subtype SNMP1.

It is found in the cell membrane. Plays an olfactory role that is not restricted to pheromone sensitivity. May play a role in the elimination of lipophilic components from the sensillum lymph. This Heliothis virescens (Tobacco budworm moth) protein is Sensory neuron membrane protein 2.